Reading from the N-terminus, the 214-residue chain is Imidazole glycerol phosphate synthase subunit HisH (214 aa).

A Glutamine amidotransferase type-1 domain is found at 3–211; sequence TIAVIDYDMG…VSKVIPKNLA (209 aa). The Nucleophile role is filled by C81. Active-site residues include H186 and E188.

In terms of assembly, heterodimer of HisH and HisF.

Its subcellular location is the cytoplasm. The enzyme catalyses 5-[(5-phospho-1-deoxy-D-ribulos-1-ylimino)methylamino]-1-(5-phospho-beta-D-ribosyl)imidazole-4-carboxamide + L-glutamine = D-erythro-1-(imidazol-4-yl)glycerol 3-phosphate + 5-amino-1-(5-phospho-beta-D-ribosyl)imidazole-4-carboxamide + L-glutamate + H(+). The catalysed reaction is L-glutamine + H2O = L-glutamate + NH4(+). Its pathway is amino-acid biosynthesis; L-histidine biosynthesis; L-histidine from 5-phospho-alpha-D-ribose 1-diphosphate: step 5/9. Its function is as follows. IGPS catalyzes the conversion of PRFAR and glutamine to IGP, AICAR and glutamate. The HisH subunit catalyzes the hydrolysis of glutamine to glutamate and ammonia as part of the synthesis of IGP and AICAR. The resulting ammonia molecule is channeled to the active site of HisF. The polypeptide is Imidazole glycerol phosphate synthase subunit HisH (Trichodesmium erythraeum (strain IMS101)).